A 338-amino-acid chain; its full sequence is tRNA N6-adenosine threonylcarbamoyltransferase (338 aa).

Fe cation is bound by residues His-110 and His-114. Substrate is bound by residues 132-136, Asp-165, Gly-178, and Asn-274; that span reads VLSGG. Asp-298 serves as a coordination point for Fe cation.

The protein belongs to the KAE1 / TsaD family. It depends on Fe(2+) as a cofactor.

Its subcellular location is the cytoplasm. It catalyses the reaction L-threonylcarbamoyladenylate + adenosine(37) in tRNA = N(6)-L-threonylcarbamoyladenosine(37) in tRNA + AMP + H(+). Functionally, required for the formation of a threonylcarbamoyl group on adenosine at position 37 (t(6)A37) in tRNAs that read codons beginning with adenine. Is involved in the transfer of the threonylcarbamoyl moiety of threonylcarbamoyl-AMP (TC-AMP) to the N6 group of A37, together with TsaE and TsaB. TsaD likely plays a direct catalytic role in this reaction. This is tRNA N6-adenosine threonylcarbamoyltransferase from Borrelia recurrentis (strain A1).